A 224-amino-acid polypeptide reads, in one-letter code: Flagellar L-ring protein (224 aa).

The first 15 residues, 1–15 (MLRYLMVGSLLVLAG), serve as a signal peptide directing secretion. Residue Cys-16 is the site of N-palmitoyl cysteine attachment. A lipid anchor (S-diacylglycerol cysteine) is attached at Cys-16.

Belongs to the FlgH family. The basal body constitutes a major portion of the flagellar organelle and consists of four rings (L,P,S, and M) mounted on a central rod.

It is found in the cell outer membrane. The protein localises to the bacterial flagellum basal body. Functionally, assembles around the rod to form the L-ring and probably protects the motor/basal body from shearing forces during rotation. The polypeptide is Flagellar L-ring protein (Shewanella amazonensis (strain ATCC BAA-1098 / SB2B)).